The following is a 902-amino-acid chain: Ribonuclease E (902 aa).

The region spanning 39–119 (SNIYKGKITR…GTKGAALTTF (81 aa)) is the S1 motif domain. Residues Asp303 and Asp346 each coordinate Mg(2+). Zn(2+)-binding residues include Cys404 and Cys407. Residues 404 to 407 (CPRC) form a required for zinc-mediated homotetramerization and catalytic activity region. Positions 881–902 (GKNSAGVHSATNFSNSPVSKLK) are disordered. The span at 889-902 (SATNFSNSPVSKLK) shows a compositional bias: polar residues.

It belongs to the RNase E/G family. RNase E subfamily. As to quaternary structure, component of the RNA degradosome, which is a multiprotein complex involved in RNA processing and mRNA degradation. Within the RNA degradosome, RNase E assembles into a homotetramer formed by a dimer of dimers. It depends on Zn(2+) as a cofactor. Mg(2+) serves as cofactor.

It localises to the cytoplasm. It is found in the cell inner membrane. The catalysed reaction is Endonucleolytic cleavage of single-stranded RNA in A- and U-rich regions.. Endoribonuclease that plays a central role in RNA processing and decay. Required for the maturation of 5S and 16S rRNAs and the majority of tRNAs. Also involved in the degradation of most mRNAs. In Buchnera aphidicola subsp. Acyrthosiphon pisum (strain APS) (Acyrthosiphon pisum symbiotic bacterium), this protein is Ribonuclease E.